Here is a 552-residue protein sequence, read N- to C-terminus: Glutamyl-tRNA reductase 1, chloroplastic (552 aa).

Substrate is bound by residues 150-153, Ser-210, 215-217, and Gln-221; these read TCNR and EGQ. Cys-151 (nucleophile) is an active-site residue. An NADP(+)-binding site is contributed by 292 to 297; sequence GAGKMG.

The protein belongs to the glutamyl-tRNA reductase family. In terms of tissue distribution, primarily in cotyledons and hypocotyls of greening cucumber seedlings.

The protein localises to the plastid. The protein resides in the chloroplast. The catalysed reaction is (S)-4-amino-5-oxopentanoate + tRNA(Glu) + NADP(+) = L-glutamyl-tRNA(Glu) + NADPH + H(+). The protein operates within porphyrin-containing compound metabolism; protoporphyrin-IX biosynthesis; 5-aminolevulinate from L-glutamyl-tRNA(Glu): step 1/2. In terms of biological role, catalyzes the NADPH-dependent reduction of glutamyl-tRNA(Glu) to glutamate 1-semialdehyde (GSA). The sequence is that of Glutamyl-tRNA reductase 1, chloroplastic (HEMA1) from Cucumis sativus (Cucumber).